Consider the following 82-residue polypeptide: Small ribosomal subunit protein uS17c (82 aa).

The protein belongs to the universal ribosomal protein uS17 family. In terms of assembly, part of the 30S ribosomal subunit.

It localises to the plastid. It is found in the chloroplast. Its function is as follows. One of the primary rRNA binding proteins, it binds specifically to the 5'-end of 16S ribosomal RNA. The sequence is that of Small ribosomal subunit protein uS17c (rps17) from Emiliania huxleyi (Coccolithophore).